A 284-amino-acid chain; its full sequence is Efem/EfeO family lipoprotein (284 aa).

An N-terminal signal peptide occupies residues Met1–Ala17. Residue Cys18 is the site of N-palmitoyl cysteine attachment. Residue Cys18 is the site of S-diacylglycerol cysteine attachment.

The protein belongs to the EfeM/EfeO family.

The protein localises to the cell membrane. The protein is Efem/EfeO family lipoprotein of Staphylococcus aureus (strain MRSA252).